The primary structure comprises 210 residues: Na(+)-translocating NADH-quinone reductase subunit D (210 aa).

6 helical membrane-spanning segments follow: residues 14 to 34 (PIVN…ALAV), 42 to 62 (LVMA…ISMI), 72 to 92 (IIVQ…LLQA), 103 to 123 (VFVG…AYAM), 131 to 151 (FMDG…VGFV), and 178 to 198 (NGLL…IWII).

This sequence belongs to the NqrDE/RnfAE family. In terms of assembly, composed of six subunits; NqrA, NqrB, NqrC, NqrD, NqrE and NqrF.

It is found in the cell inner membrane. The catalysed reaction is a ubiquinone + n Na(+)(in) + NADH + H(+) = a ubiquinol + n Na(+)(out) + NAD(+). Functionally, NQR complex catalyzes the reduction of ubiquinone-1 to ubiquinol by two successive reactions, coupled with the transport of Na(+) ions from the cytoplasm to the periplasm. NqrA to NqrE are probably involved in the second step, the conversion of ubisemiquinone to ubiquinol. The chain is Na(+)-translocating NADH-quinone reductase subunit D from Shewanella baltica (strain OS223).